A 118-amino-acid chain; its full sequence is MSIDEVIKLENWMKNIGRYLSYLISDKFEEYAYDIIDGVAKARNANELLEALYKGLRLSPKLKKKGNIEVPSPEDVKKLEETLREIGDNEKEVRKIGLSMALWAFADWEKDHRKRGDQ.

This is an uncharacterized protein from Methanocaldococcus jannaschii (strain ATCC 43067 / DSM 2661 / JAL-1 / JCM 10045 / NBRC 100440) (Methanococcus jannaschii).